The chain runs to 357 residues: Protein FAM118A (357 aa).

Met1 carries the N-acetylmethionine modification. A helical membrane pass occupies residues 30–46; it reads LLLVIGTGVSAAVAPGI. Residue Ser311 is modified to Phosphoserine.

This sequence belongs to the FAM118 family.

It localises to the membrane. This is Protein FAM118A (Fam118a) from Mus musculus (Mouse).